Reading from the N-terminus, the 233-residue chain is Orotidine 5'-phosphate decarboxylase (233 aa).

Substrate-binding positions include Asp-9, Lys-31, Asp-58–Thr-67, Thr-120, Arg-182, Gln-191, Gly-211, and Arg-212. The active-site Proton donor is Lys-60.

The protein belongs to the OMP decarboxylase family. Type 1 subfamily. As to quaternary structure, homodimer.

It carries out the reaction orotidine 5'-phosphate + H(+) = UMP + CO2. It functions in the pathway pyrimidine metabolism; UMP biosynthesis via de novo pathway; UMP from orotate: step 2/2. In terms of biological role, catalyzes the decarboxylation of orotidine 5'-monophosphate (OMP) to uridine 5'-monophosphate (UMP). This Listeria innocua serovar 6a (strain ATCC BAA-680 / CLIP 11262) protein is Orotidine 5'-phosphate decarboxylase.